We begin with the raw amino-acid sequence, 198 residues long: Guanine nucleotide-binding protein subunit alpha-11 (198 aa).

The segment at 1 to 11 (LLGTGESGKST) is G1 motif. A G-alpha domain is found at 1–198 (LLGTGESGKS…LSEYDHVLVE (198 aa)). GTP contacts are provided by residues 3-10 (GTGESGKS) and 137-140 (LRVR). Ser-10 lines the Mg(2+) pocket. Positions 135–143 (DVLRVRVPT) are G2 motif. Position 143 (Thr-143) interacts with Mg(2+). Residues 158-167 (FRMVDVGGQR) are G3 motif.

The protein belongs to the G-alpha family. G(q) subfamily. As to quaternary structure, g proteins are composed of 3 units; alpha, beta and gamma. The alpha chain contains the guanine nucleotide binding site. Interacts with RGS22. Interacts with NTSR1.

It is found in the cell membrane. The protein localises to the cytoplasm. The enzyme catalyses GTP + H2O = GDP + phosphate + H(+). Functionally, guanine nucleotide-binding proteins (G proteins) function as transducers downstream of G protein-coupled receptors (GPCRs) in numerous signaling cascades. The alpha chain contains the guanine nucleotide binding site and alternates between an active, GTP-bound state and an inactive, GDP-bound state. Signaling by an activated GPCR promotes GDP release and GTP binding. The alpha subunit has a low GTPase activity that converts bound GTP to GDP, thereby terminating the signal. Both GDP release and GTP hydrolysis are modulated by numerous regulatory proteins. Signaling is mediated via phospholipase C-beta-dependent inositol lipid hydrolysis for signal propagation: activates phospholipase C-beta: following GPCR activation, GNA11 activates PLC-beta (PLCB1, PLCB2, PLCB3 or PLCB4), leading to production of diacylglycerol (DAG) and inositol 1,4,5-trisphosphate (IP3). Transduces FFAR4 signaling in response to long-chain fatty acids (LCFAs). Together with GNAQ, required for heart development. In the respiratory epithelium, transmits OXGR1-dependent signals that lead to downstream intracellular Ca(2+) release and mucocilliary clearance of airborne pathogens. In Canis lupus familiaris (Dog), this protein is Guanine nucleotide-binding protein subunit alpha-11 (GNA11).